The following is a 1190-amino-acid chain: Tight junction protein 2 (1190 aa).

Serine 16 is subject to Phosphoserine. The PDZ 1 domain maps to threonine 33–arginine 120. A phosphoserine mark is found at serine 130, serine 150, serine 153, serine 163, serine 168, serine 170, serine 174, serine 200, serine 220, serine 232, serine 244, serine 266, serine 325, serine 398, serine 400, serine 406, serine 415, serine 424, serine 430, and serine 431. Positions arginine 152–isoleucine 306 are disordered. Residues arginine 169–histidine 291 show a composition bias toward basic and acidic residues. Residues glycine 307 to serine 385 enclose the PDZ 2 domain. Positions isoleucine 408–tyrosine 506 are disordered. A compositionally biased stretch (basic and acidic residues) spans serine 415–proline 446. Threonine 455 is subject to Phosphothreonine. The residue at position 499 (serine 499) is a Phosphoserine. One can recognise a PDZ 3 domain in the interval asparagine 509–serine 590. Position 574 is a phosphotyrosine (tyrosine 574). The SH3 domain maps to glycine 604–alanine 669. The region spanning asparagine 678–glutamine 876 is the Guanylate kinase-like domain. 2 positions are modified to phosphoserine: serine 702 and serine 902. A Phosphothreonine modification is found at threonine 905. 2 positions are modified to phosphoserine: serine 913 and serine 920. Disordered regions lie at residues serine 920–leucine 1079 and asparagine 1105–leucine 1190. 2 positions are modified to phosphothreonine: threonine 925 and threonine 933. Residues valine 956–proline 967 are compositionally biased toward basic and acidic residues. A phosphoserine mark is found at serine 966, serine 978, serine 986, serine 1006, serine 1067, and serine 1068. Residues glutamate 994 to glutamate 1014 are compositionally biased toward basic and acidic residues. Over residues glutamate 1060–aspartate 1072 the composition is skewed to acidic residues. Position 1118 is a phosphotyrosine (tyrosine 1118). Threonine 1131 bears the Phosphothreonine mark. Phosphoserine is present on residues serine 1147 and serine 1159. Residues tyrosine 1166–lysine 1175 show a composition bias toward basic and acidic residues. An interaction with SCRIB region spans residues threonine 1188–leucine 1190.

The protein belongs to the MAGUK family. Homodimer. Interacts (via PDZ2 domain) with TJP1/ZO1 (via PDZ2 domain). Interacts with OCLN. Interacts with UBN1. Interacts with SAFB in the nucleus. Interacts with SCRIB. Interacts with USP53 (via the C-terminal region). Interacts with claudins, including CLDN1, CLDN2, CLDN3, CLDN5 and CLDN7. Interacts with CLDN18. Interacts (via N-terminus) with CTNNA1. In terms of tissue distribution, this protein is found in epithelial cell junctions. Isoform A1 is abundant in the heart and brain. Detected in brain and skeletal muscle. It is present almost exclusively in normal tissues. Isoform C1 is expressed at high level in the kidney, pancreas, heart and placenta. Not detected in brain and skeletal muscle. Found in normal as well as in most neoplastic tissues.

Its subcellular location is the cell junction. The protein localises to the adherens junction. It is found in the cell membrane. It localises to the tight junction. The protein resides in the nucleus. In terms of biological role, plays a role in tight junctions and adherens junctions. Acts as a positive regulator of RANKL-induced osteoclast differentiation, potentially via mediating downstream transcriptional activity. This Homo sapiens (Human) protein is Tight junction protein 2.